Here is a 585-residue protein sequence, read N- to C-terminus: Protein cereblon (585 aa).

2 disordered regions span residues 1 to 109 and 156 to 195; these read MDEE…DLES and FSQERRRSRTSEETSQEAAEQPVDPPPQQPPRPPIDIGFD. The span at 80-95 shows a compositional bias: polar residues; sequence QDDTASEGSHPSSDMS. Basic and acidic residues predominate over residues 158 to 167; the sequence is QERRRSRTSE. Over residues 178-189 the composition is skewed to pro residues; the sequence is VDPPPQQPPRPP. In terms of domain architecture, Lon N-terminal spans 225–451; the sequence is HMLIFLHQHI…LIKSTFKDET (227 aa). Residues 450 to 559 enclose the CULT domain; the sequence is ETLFFCRYCN…LAGSSVRIGK (110 aa). C455, C458, C524, and C527 together coordinate Zn(2+).

This sequence belongs to the CRBN family. Likely a component of a DCX (DDB1-CUL4-X-box) protein ligase complex. May interact with pic/DDB1. In terms of processing, ubiquitinated. Expressed in the fat body (at protein level).

It localises to the nucleus. Its pathway is protein modification; protein ubiquitination. Functionally, substrate recognition component of a DCX (DDB1-CUL4-X-box) E3 protein ligase complex that mediates the ubiquitination and subsequent proteasomal degradation of target proteins. Has an essential role in mediating growth by negatively regulating insulin signaling. It also has a role in maintaining presynaptic function in the neuromuscular junction synapses of third-instar larvae. The sequence is that of Protein cereblon from Drosophila melanogaster (Fruit fly).